Reading from the N-terminus, the 823-residue chain is MMLHNAKASDNNELDQAKPLIPQLSDKQKEALNDACGRIAPTWPLDELIAVNPWWEMRDQHISKVSAKLSALSQAQCVMPKSYFQEVWMETLQPQHVQQAIDEMEKDYTVDNLERYLLEEDEHTHWHNVSDFVDSGRDRKYKMAWRDEITHQISQFCADFFRLKDSQGTFSKTYQGLYHEWLATTRQDKGIEILMGEDGLTEHFMDLPESSESLLAEALVGLRVPDSQIADYAHALLLDANGWASWVAYLRWQDRLSNAENDLMMDFLAIRVAWEWVLWQHQKDSDRSVFNELKVMWHHQMSILPDLIATHEAAQAKSWIWQRAAEIAYQSELQQQLKHASRTDQKVETESPPVLLQAAFCIDVRSEVIRRALEAQDSRVETLGFAGFFGLPIEYQPAGTDVSRPQLPGLLKSGIKVTPVMTKVSKGATKQALNRKARWIEWGNAPPATFSMVEATGLMYAFKLLRNSLFPESHTNPINAIPATDAFELTQNDSPLTLDQKVELAAGILHAMGLDHDLAETVMLVGHGSTSCNNPHAAGLDCGACGGQTGEINVRVLAFLLNDESVRQGLLEKDIKIPAQTRFVAAMHNTTTDEFTCFGLNHVDETIQKWLARATEFARQERSTRLGLNHLEGQNLHQSIQRRAKDWSQVRPEWGLSNNAAFIVAPRARTRGVDFQGRAFLHDYDWQQDADNSLLTLIMTAPMVVTNWINLQYYASVCDNHVYGSGNKVLHNVVDGCIGVFEGNGGDLRIGLPMQSLHNGEKWMHEPLRLSVYIDAPQKTIAQVVAENDVVRHLIDNEWLYCFSWAPDGRIHRYFNNQWLESA.

Zn(2+)-binding residues include C361, D363, H527, and C542.

It belongs to the inorganic carbon transporter (TC 9.A.2) DabA family. As to quaternary structure, forms a complex with DabB. Requires Zn(2+) as cofactor.

The protein resides in the cell inner membrane. Its activity is regulated as follows. Intracellular DIC accumulation is sensitive to CCCP (carbonyl cyanide-m-chlorophenylhydrazone) and DCCD (N,N-dicyclohexylcarbodiimide) and therefore likely driven by either proton potential, ATP, or both. Its function is as follows. Part of an energy-coupled inorganic carbon pump. Probably involved in transport of dissolved inorganic carbon (DIC) with upstream gene dabB (Tcr_0853); has been suggested to be a proton-DIC symporter. This chain is Probable inorganic carbon transporter subunit DabA, found in Hydrogenovibrio crunogenus (strain DSM 25203 / XCL-2) (Thiomicrospira crunogena).